The primary structure comprises 155 residues: Endoribonuclease YbeY (155 aa).

3 residues coordinate Zn(2+): histidine 120, histidine 124, and histidine 130.

The protein belongs to the endoribonuclease YbeY family. Requires Zn(2+) as cofactor.

Its subcellular location is the cytoplasm. Functionally, single strand-specific metallo-endoribonuclease involved in late-stage 70S ribosome quality control and in maturation of the 3' terminus of the 16S rRNA. The protein is Endoribonuclease YbeY of Staphylococcus aureus (strain bovine RF122 / ET3-1).